The following is a 1063-amino-acid chain: NAD-specific glutamate dehydrogenase (1063 aa).

Belongs to the Glu/Leu/Phe/Val dehydrogenases family. Highly divergent. Homotetramer.

The enzyme catalyses L-glutamate + NAD(+) + H2O = 2-oxoglutarate + NH4(+) + NADH + H(+). With respect to regulation, allosterically activated by NADP(+). This is NAD-specific glutamate dehydrogenase from Achlya klebsiana.